The chain runs to 45 residues: Bomanin Short 1 (45 aa).

The N-terminal stretch at 1–20 (MKFFSVVTVFVLGLLAVANA) is a signal peptide. Positions 21-27 (VPLSPDP) are cleaved as a propeptide — removed by a dipeptidylpeptidase. Cys-36 and Cys-39 are joined by a disulfide. Gly-43 carries the post-translational modification Glycine amide.

Hemolymph (at protein level).

It is found in the secreted. Its function is as follows. Secreted immune-induced peptide induced by Toll signaling. Has a role in resistance to bacterial and fungal infections. Has no activity against the fungus C.glabrata in vitro. This Drosophila melanogaster (Fruit fly) protein is Bomanin Short 1.